Reading from the N-terminus, the 31-residue chain is Mycofactocin precursor peptide (31 aa).

Belongs to the mycofactocin precursor peptide family. The post-translational modifications that lead to mycofactocin involve oxidative decarboxylation of the C-terminal tyrosine residue catalyzed by MftC, introduction of a tyramine-valine cross-link, removal of the modified C-terminal dipeptide by MftE. The released dipeptide then undergoes oxidative deamination by MftD, glycosylation by MftF and methylation by an unknown enzyme.

Its function is as follows. Precursor peptide that leads to mycofactocin (MFT) after extensive post-translational modifications by enzymes encoded by adjacent genes. Mycofactocin acts as a redox cofactor of nicotinamide-dependent oxidoreductases encoded in the same locus. Is required for the in vivo ethanol assimilation in M.smegmatis. The polypeptide is Mycofactocin precursor peptide (Mycolicibacterium smegmatis (strain ATCC 700084 / mc(2)155) (Mycobacterium smegmatis)).